The following is a 104-amino-acid chain: Small ribosomal subunit protein bS16 (104 aa).

It belongs to the bacterial ribosomal protein bS16 family.

The chain is Small ribosomal subunit protein bS16 from Wolbachia pipientis subsp. Culex pipiens (strain wPip).